The primary structure comprises 297 residues: Acetyl-coenzyme A carboxylase carboxyl transferase subunit beta (297 aa).

Residues 27–296 form the CoA carboxyltransferase N-terminal domain; sequence LWHKCPSCEA…PEQAREAAAV (270 aa). Residues Cys-31, Cys-34, Cys-50, and Cys-53 each coordinate Zn(2+). The C4-type zinc finger occupies 31 to 53; the sequence is CPSCEAVLYRPELEKTLDVCPKC.

The protein belongs to the AccD/PCCB family. Acetyl-CoA carboxylase is a heterohexamer composed of biotin carboxyl carrier protein (AccB), biotin carboxylase (AccC) and two subunits each of ACCase subunit alpha (AccA) and ACCase subunit beta (AccD). It depends on Zn(2+) as a cofactor.

It is found in the cytoplasm. It catalyses the reaction N(6)-carboxybiotinyl-L-lysyl-[protein] + acetyl-CoA = N(6)-biotinyl-L-lysyl-[protein] + malonyl-CoA. It participates in lipid metabolism; malonyl-CoA biosynthesis; malonyl-CoA from acetyl-CoA: step 1/1. In terms of biological role, component of the acetyl coenzyme A carboxylase (ACC) complex. Biotin carboxylase (BC) catalyzes the carboxylation of biotin on its carrier protein (BCCP) and then the CO(2) group is transferred by the transcarboxylase to acetyl-CoA to form malonyl-CoA. The protein is Acetyl-coenzyme A carboxylase carboxyl transferase subunit beta of Pseudomonas putida (strain GB-1).